The primary structure comprises 336 residues: Aromatic prenyltransferase (336 aa).

It belongs to the aromatic prenyltransferase family.

In terms of biological role, prenyltransferase that attaches isoprenoid moieties to carbon atoms of aromatic substrates in an enzyme-catalyzed Friedel-Crafts reaction. Shows specificity for dimethylallyl diphosphate (DMAPP) and does not accept geranyl diphosphate (GPP) or isopentenyl diphosphate (IPP). Prenylates the artificial substrate 2,7-dihydroxynaphthalene (2,7-DHN), as well as dihydrophenazine-1-carboxylic acid at a lower level. Only traces of products are detected with aspulvinone E, flaviolin, or 4-hydroxybenzoic acid as substrates; and no product is formed with L-tryptophan, L-tyrosine, or 4-hydroxyphenylpyruvate. Ptf seems no to be involved in the prenylation reaction in the biosynthesis of aspulvinone H and J and the physiological function of ptf remains unknown. The polypeptide is Aromatic prenyltransferase (Aspergillus terreus (strain NIH 2624 / FGSC A1156)).